A 194-amino-acid polypeptide reads, in one-letter code: Probable GTP-binding protein EngB (194 aa).

In terms of domain architecture, EngB-type G spans 22 to 194 (DLPEYALAGR…AWQFIKEGME (173 aa)). GTP contacts are provided by residues 30–37 (GRSNVGKS), 57–61 (GKTQT), 75–78 (DVPG), 142–145 (TKAD), and 174–176 (FSS). Positions 37 and 59 each coordinate Mg(2+).

Belongs to the TRAFAC class TrmE-Era-EngA-EngB-Septin-like GTPase superfamily. EngB GTPase family. Requires Mg(2+) as cofactor.

Functionally, necessary for normal cell division and for the maintenance of normal septation. This Listeria innocua serovar 6a (strain ATCC BAA-680 / CLIP 11262) protein is Probable GTP-binding protein EngB.